Consider the following 197-residue polypeptide: Peptide deformylase (197 aa).

Fe cation contacts are provided by Cys106 and His148. The active site involves Glu149. Residue His152 coordinates Fe cation.

It belongs to the polypeptide deformylase family. Fe(2+) serves as cofactor.

It catalyses the reaction N-terminal N-formyl-L-methionyl-[peptide] + H2O = N-terminal L-methionyl-[peptide] + formate. In terms of biological role, removes the formyl group from the N-terminal Met of newly synthesized proteins. Requires at least a dipeptide for an efficient rate of reaction. N-terminal L-methionine is a prerequisite for activity but the enzyme has broad specificity at other positions. In Mycolicibacterium gilvum (strain PYR-GCK) (Mycobacterium gilvum (strain PYR-GCK)), this protein is Peptide deformylase.